Here is a 154-residue protein sequence, read N- to C-terminus: Putative thioredoxin H10 (154 aa).

Residues 24–148 form the Thioredoxin domain; it reads NNNNSYGQTR…LQKKTAAAAD (125 aa). Catalysis depends on nucleophile residues Cys74 and Cys77. Cysteines 74 and 77 form a disulfide.

The protein belongs to the thioredoxin family.

It is found in the cytoplasm. Probable thiol-disulfide oxidoreductase that may be involved in the redox regulation of a number of cytosolic enzymes. This Arabidopsis thaliana (Mouse-ear cress) protein is Putative thioredoxin H10.